The following is a 225-amino-acid chain: Protein-L-isoaspartate O-methyltransferase 2 (225 aa).

S73 is a catalytic residue.

It belongs to the methyltransferase superfamily. L-isoaspartyl/D-aspartyl protein methyltransferase family.

Its subcellular location is the cytoplasm. The enzyme catalyses [protein]-L-isoaspartate + S-adenosyl-L-methionine = [protein]-L-isoaspartate alpha-methyl ester + S-adenosyl-L-homocysteine. Its function is as follows. Catalyzes the methyl esterification of L-isoaspartyl residues in peptides and proteins that result from spontaneous decomposition of normal L-aspartyl and L-asparaginyl residues. It plays a role in the repair and/or degradation of damaged proteins. This Pelobacter propionicus (strain DSM 2379 / NBRC 103807 / OttBd1) protein is Protein-L-isoaspartate O-methyltransferase 2.